A 439-amino-acid polypeptide reads, in one-letter code: GlutamylGlutaminyl-tRNA synthetase (439 aa).

The 'HIGH' region motif lies at 6-16 (PSPTGDMHIGN). Positions 232–236 (KMSKR) match the 'KMSKS' region motif. An ATP-binding site is contributed by Lys235.

It belongs to the class-I aminoacyl-tRNA synthetase family. Glutamate--tRNA ligase type 1 subfamily. In terms of assembly, monomer.

The protein resides in the cytoplasm. The enzyme catalyses tRNA(Glu) + L-glutamate + ATP = L-glutamyl-tRNA(Gln) + AMP + diphosphate. In terms of biological role, aminoacylates tRNA(Gln) with glutamate. Does not aminoacylate tRNA(Glu). The polypeptide is GlutamylGlutaminyl-tRNA synthetase (gltX2) (Helicobacter pylori (strain ATCC 700392 / 26695) (Campylobacter pylori)).